The primary structure comprises 963 residues: Importin-13 (963 aa).

20 HEAT repeats span residues 24 to 54, 56 to 88, 95 to 135, 142 to 179, 194 to 231, 236 to 268, 276 to 325, 330 to 372, 375 to 438, 440 to 476, 487 to 522, 524 to 558, 562 to 600, 603 to 648, 676 to 716, 720 to 754, 761 to 803, 815 to 845, 860 to 893, and 897 to 931; these read ENVE…QAQV, PQAW…KISR, TDQY…LSMM, AVAD…EFQT, LAVE…SWVQ, LQDC…NAIS, VNTL…ALLD, WQSF…DDIL, EAEK…YEML, AELL…FQSI, VVPG…WLAD, PVMI…CREC, LPPY…LLSA, VEEI…SNLF, PVVV…VKTL, FAPM…VHIF, FPPI…ALKR, VKAV…TELL, EDGR…FALN, and FSLL…QQIL. In terms of domain architecture, Importin N-terminal spans 45 to 111; that stretch reads AQKWLMQAQV…KAQLFTQITR (67 aa).

The protein belongs to the importin beta family. Interacts with UBC9, RAN, RBM8A, eIF-1A and PAX6.

Its subcellular location is the cytoplasm. The protein localises to the nucleus. In terms of biological role, functions in nuclear protein import as nuclear transport receptor. Serves as receptor for nuclear localization signals (NLS) in cargo substrates. Is thought to mediate docking of the importin/substrate complex to the nuclear pore complex (NPC) through binding to nucleoporin and the complex is subsequently translocated through the pore by an energy requiring, Ran-dependent mechanism. At the nucleoplasmic side of the NPC, Ran binds to the importin, the importin/substrate complex dissociates and importin is re-exported from the nucleus to the cytoplasm where GTP hydrolysis releases Ran. The directionality of nuclear import is thought to be conferred by an asymmetric distribution of the GTP- and GDP-bound forms of Ran between the cytoplasm and nucleus. Mediates the nuclear import of UBC9, the RBM8A/MAGOH complex, PAX6 and probably other members of the paired homeobox family. Also mediates nuclear export of eIF-1A, and the cytoplasmic release of eIF-1A is triggered by the loading of import substrates onto IPO13. This Mus musculus (Mouse) protein is Importin-13 (Ipo13).